Here is a 1033-residue protein sequence, read N- to C-terminus: Tyrosine-protein kinase-like otk (1033 aa).

The N-terminal stretch at M1–A22 is a signal peptide. Topologically, residues S23–A581 are extracellular. Ig-like C2-type domains follow at residues S25–S108, P109–S199, P251–S365, P368–N463, and P468–V558. N-linked (GlcNAc...) asparagine glycosylation occurs at N39. Disulfide bonds link C46–C95, C137–C188, C276–C354, and C399–C447. N-linked (GlcNAc...) asparagine glycans are attached at residues N336, N417, N429, N444, N457, N512, and N524. A disulfide bond links C490 and C542. A helical membrane pass occupies residues V582–W602. The Cytoplasmic segment spans residues C603–K1033. Disordered regions lie at residues L617–A679 and S718–M760. The segment covering K655–R673 has biased composition (polar residues). S678 carries the phosphoserine modification. The Protein kinase; inactive domain occupies L692–M1028. Residues T720 to S731 are compositionally biased toward basic and acidic residues.

This sequence belongs to the protein kinase superfamily. Tyr protein kinase family. Insulin receptor subfamily. In terms of assembly, interacts with plexA; component of a receptor complex that mediates the repulsive signaling in response to Semaphorin ligands.

It localises to the cell membrane. Its function is as follows. Acts as a calcium-dependent, homophilic cell adhesion molecule that regulates neural recognition during the development of the nervous system. Component of the repulsive Plexin signaling response to regulate motor axon guidance at the embryonic stage. Also component of a receptor complex that is required in the adult visual system to innervate the lamina layer; specific targeting of R1-R6 axons. The protein is Tyrosine-protein kinase-like otk of Drosophila erecta (Fruit fly).